The chain runs to 283 residues: Bifunctional protein FolD (283 aa).

NADP(+) is bound by residues 165-167 (GRG), Thr-192, and Val-233.

Belongs to the tetrahydrofolate dehydrogenase/cyclohydrolase family. In terms of assembly, homodimer.

It carries out the reaction (6R)-5,10-methylene-5,6,7,8-tetrahydrofolate + NADP(+) = (6R)-5,10-methenyltetrahydrofolate + NADPH. The enzyme catalyses (6R)-5,10-methenyltetrahydrofolate + H2O = (6R)-10-formyltetrahydrofolate + H(+). It functions in the pathway one-carbon metabolism; tetrahydrofolate interconversion. Its function is as follows. Catalyzes the oxidation of 5,10-methylenetetrahydrofolate to 5,10-methenyltetrahydrofolate and then the hydrolysis of 5,10-methenyltetrahydrofolate to 10-formyltetrahydrofolate. In Mycolicibacterium smegmatis (strain ATCC 700084 / mc(2)155) (Mycobacterium smegmatis), this protein is Bifunctional protein FolD.